We begin with the raw amino-acid sequence, 273 residues long: Large ribosomal subunit protein uL2 (273 aa).

Disordered stretches follow at residues 31–50 and 221–273; these read APLLDSKSKTGGRNNLGRIT and RGTA…RRGK. Positions 253–273 are enriched in basic residues; sequence KGKKTRHNKRTDKYIVRRRGK.

This sequence belongs to the universal ribosomal protein uL2 family. In terms of assembly, part of the 50S ribosomal subunit. Forms a bridge to the 30S subunit in the 70S ribosome.

Functionally, one of the primary rRNA binding proteins. Required for association of the 30S and 50S subunits to form the 70S ribosome, for tRNA binding and peptide bond formation. It has been suggested to have peptidyltransferase activity; this is somewhat controversial. Makes several contacts with the 16S rRNA in the 70S ribosome. This Actinobacillus pleuropneumoniae serotype 7 (strain AP76) protein is Large ribosomal subunit protein uL2.